The chain runs to 557 residues: Urocanate hydratase (557 aa).

NAD(+) contacts are provided by residues 53 to 54 (GG), glutamine 131, 177 to 179 (GMG), glutamate 197, arginine 202, 243 to 244 (NA), 264 to 268 (QTSAH), 274 to 275 (YL), and tyrosine 323. The active site involves cysteine 411. Glycine 493 serves as a coordination point for NAD(+).

It belongs to the urocanase family. NAD(+) serves as cofactor.

The protein resides in the cytoplasm. It catalyses the reaction 4-imidazolone-5-propanoate = trans-urocanate + H2O. It participates in amino-acid degradation; L-histidine degradation into L-glutamate; N-formimidoyl-L-glutamate from L-histidine: step 2/3. In terms of biological role, catalyzes the conversion of urocanate to 4-imidazolone-5-propionate. The polypeptide is Urocanate hydratase (Pseudomonas putida (strain ATCC 700007 / DSM 6899 / JCM 31910 / BCRC 17059 / LMG 24140 / F1)).